Here is a 541-residue protein sequence, read N- to C-terminus: Calcium/calmodulin-dependent protein kinase kinase (541 aa).

The interval 83-106 (AVQEDDEAGPHSSNNLAATMSPNL) is disordered. The segment covering 93 to 106 (HSSNNLAATMSPNL) has biased composition (polar residues). The Protein kinase domain maps to 130 to 411 (YRLMEEIGQG…LHEVKVHTWV (282 aa)). ATP contacts are provided by residues 136–144 (IGQGSYGIV) and K159. The RP domain stretch occupies residues 169-190 (NFACFRQPPPRRNKENAAPSVL). D276 acts as the Proton acceptor in catalysis. The autoinhibitory domain stretch occupies residues 437–442 (ENCVRV). The calmodulin-binding stretch occupies residues 440-465 (VRVIPRLDTLILVKAMGHRKRFGNPF). The interval 462-512 (GNPFRNKLSAQSSIRDRRKSSSVKDPTYVPPPNSPPATSNNNLNSTKVDRP) is disordered. A compositionally biased stretch (low complexity) spans 497–507 (PATSNNNLNST).

It belongs to the protein kinase superfamily. Ser/Thr protein kinase family. The cofactor is Mg(2+). In terms of tissue distribution, expressed in head and tail neurons and vulval muscles.

It is found in the cytoplasm. The catalysed reaction is L-seryl-[protein] + ATP = O-phospho-L-seryl-[protein] + ADP + H(+). It catalyses the reaction L-threonyl-[protein] + ATP = O-phospho-L-threonyl-[protein] + ADP + H(+). With respect to regulation, activated by Ca(2+)/calmodulin. Binding of calmodulin may relieve intrasteric autoinhibition. Calcium/calmodulin-dependent protein kinase which phosphorylates cmk-1. Component of a calcium-triggered signaling cascade involved in CRE-mediated transcriptional activation, probably through cmk-1-mediated crh-1/CREB phosphorylation. Plays a role in salt-avoidance learning behavior via the phosphorylation of cmk-1. In Caenorhabditis elegans, this protein is Calcium/calmodulin-dependent protein kinase kinase.